The primary structure comprises 270 residues: MDNKIVYVVSDSVGETADLVVRAAMGQFPFAPDIRRVPYVEDTGTLKEVISIAKSNQALICFTLVKPDMRQYLVTEAAKEGVEAYDIIGPLIDQIEEITGRVPRYEPGVVRRLDEEYFKKIEAIEFAVKYDDGRDARGILKADIVLIGISRTSKTPLSQYLAHNKRLKVANVPLVPEVDPPEELYQVAKEKCFGLKITPEKLNHIRKERLKSLGLSDGATYANINRIKEEIDHFENVVSKINCQVIDVSNKAIEETANIIVNAVQNQKMF.

Residue Gly148 to Thr155 coordinates ADP.

Belongs to the pyruvate, phosphate/water dikinase regulatory protein family. PDRP subfamily.

It carries out the reaction N(tele)-phospho-L-histidyl/L-threonyl-[pyruvate, phosphate dikinase] + ADP = N(tele)-phospho-L-histidyl/O-phospho-L-threonyl-[pyruvate, phosphate dikinase] + AMP + H(+). It catalyses the reaction N(tele)-phospho-L-histidyl/O-phospho-L-threonyl-[pyruvate, phosphate dikinase] + phosphate + H(+) = N(tele)-phospho-L-histidyl/L-threonyl-[pyruvate, phosphate dikinase] + diphosphate. Bifunctional serine/threonine kinase and phosphorylase involved in the regulation of the pyruvate, phosphate dikinase (PPDK) by catalyzing its phosphorylation/dephosphorylation. This is Putative pyruvate, phosphate dikinase regulatory protein from Bacillus cereus (strain 03BB102).